We begin with the raw amino-acid sequence, 505 residues long: Probable cytosol aminopeptidase (505 aa).

Residues Lys269 and Asp274 each contribute to the Mn(2+) site. The active site involves Lys281. Mn(2+)-binding residues include Asp292, Asp351, and Glu353. Arg355 is an active-site residue.

This sequence belongs to the peptidase M17 family. It depends on Mn(2+) as a cofactor.

The protein resides in the cytoplasm. It carries out the reaction Release of an N-terminal amino acid, Xaa-|-Yaa-, in which Xaa is preferably Leu, but may be other amino acids including Pro although not Arg or Lys, and Yaa may be Pro. Amino acid amides and methyl esters are also readily hydrolyzed, but rates on arylamides are exceedingly low.. It catalyses the reaction Release of an N-terminal amino acid, preferentially leucine, but not glutamic or aspartic acids.. Its function is as follows. Presumably involved in the processing and regular turnover of intracellular proteins. Catalyzes the removal of unsubstituted N-terminal amino acids from various peptides. The protein is Probable cytosol aminopeptidase of Rhodococcus opacus (strain B4).